Consider the following 481-residue polypeptide: Glutamate--tRNA ligase (481 aa).

The 'HIGH' region signature appears at 11-21 (PSPTGLLHIGN). Positions 255–259 (KLSKR) match the 'KMSKS' region motif. Lys-258 is a binding site for ATP.

Belongs to the class-I aminoacyl-tRNA synthetase family. Glutamate--tRNA ligase type 1 subfamily. As to quaternary structure, monomer.

Its subcellular location is the cytoplasm. It catalyses the reaction tRNA(Glu) + L-glutamate + ATP = L-glutamyl-tRNA(Glu) + AMP + diphosphate. Catalyzes the attachment of glutamate to tRNA(Glu) in a two-step reaction: glutamate is first activated by ATP to form Glu-AMP and then transferred to the acceptor end of tRNA(Glu). The chain is Glutamate--tRNA ligase from Streptococcus pyogenes serotype M4 (strain MGAS10750).